The chain runs to 328 residues: RNA 3'-terminal phosphate cyclase (328 aa).

Residues Q100 and 276 to 280 each bind ATP; that span reads HLADQ. H302 acts as the Tele-AMP-histidine intermediate in catalysis.

It belongs to the RNA 3'-terminal cyclase family. Type 1 subfamily.

It localises to the cytoplasm. It catalyses the reaction a 3'-end 3'-phospho-ribonucleotide-RNA + ATP = a 3'-end 2',3'-cyclophospho-ribonucleotide-RNA + AMP + diphosphate. In terms of biological role, catalyzes the conversion of 3'-phosphate to a 2',3'-cyclic phosphodiester at the end of RNA. The mechanism of action of the enzyme occurs in 3 steps: (A) adenylation of the enzyme by ATP; (B) transfer of adenylate to an RNA-N3'P to produce RNA-N3'PP5'A; (C) and attack of the adjacent 2'-hydroxyl on the 3'-phosphorus in the diester linkage to produce the cyclic end product. The biological role of this enzyme is unknown but it is likely to function in some aspects of cellular RNA processing. The polypeptide is RNA 3'-terminal phosphate cyclase (rtcA) (Archaeoglobus fulgidus (strain ATCC 49558 / DSM 4304 / JCM 9628 / NBRC 100126 / VC-16)).